The sequence spans 662 residues: Transmembrane 9 superfamily member 2 (662 aa).

The N-terminal stretch at 1–28 (MSSRPPASPPAQGSRLLLLSLLLLGTVP) is a signal peptide. Residues 29-299 (GPRPGSAFYL…LESMPHTHIQ (271 aa)) are Lumenal-facing. Residues 300 to 320 (WFSIMNSLVIVLFLSGMVAMI) form a helical membrane-spanning segment. The Cytoplasmic portion of the chain corresponds to 321 to 373 (MLRTLHKDIARYNQMDSTEDAQEEFGWKLVHGDIFRPPRKGMLLSVFLGSGTQ). A helical transmembrane segment spans residues 374–394 (ILIMTFVTLFFACLGFLSPAN). Over 395–397 (RGA) the chain is Lumenal. Residues 398 to 418 (LMTCAVVLWVLLGTPAGYVAA) traverse the membrane as a helical segment. Residues 419-436 (RFYKSFGGEKWKTNVLLT) lie on the Cytoplasmic side of the membrane. The helical transmembrane segment at 437–457 (SFLCPGIVFADFFIMNLILWG) threads the bilayer. The Lumenal portion of the chain corresponds to 458–465 (EGSSAAIP). A helical membrane pass occupies residues 466-486 (FGTLVAILALWFCISVPLTFI). The Cytoplasmic portion of the chain corresponds to 487 to 521 (GAYFGFKKNAIEHPVRTNQIPRQIPEQSFYTKPLP). Residues 522–542 (GIIMGGILPFGCIFIQLFFIL) traverse the membrane as a helical segment. Topologically, residues 543-553 (NSIWSHQMYYM) are lumenal. Residues 554–574 (FGFLFLVFIILVITCSEATIL) form a helical membrane-spanning segment. The Cytoplasmic segment spans residues 575–590 (LCYFHLCAEDYHWQWR). A helical membrane pass occupies residues 591 to 611 (SFLTSGFTAVYFLIYAIHYFF). Topologically, residues 612–630 (SKLQITGTASTILYFGYTM) are lumenal. A helical membrane pass occupies residues 631 to 651 (IMVLIFFLFTGTIGFFACFWF). Residues 652-662 (VTKIYSVVKVD) lie on the Cytoplasmic side of the membrane.

It belongs to the nonaspanin (TM9SF) (TC 9.A.2) family.

The protein localises to the endosome membrane. It is found in the golgi outpost. It localises to the cytoplasm. The protein resides in the cytoskeleton. Its subcellular location is the microtubule organizing center. In terms of biological role, in the intracellular compartments, may function as a channel or small molecule transporter. The sequence is that of Transmembrane 9 superfamily member 2 (Tm9sf2) from Mus musculus (Mouse).